We begin with the raw amino-acid sequence, 65 residues long: Small ribosomal subunit protein bS21 (65 aa).

Belongs to the bacterial ribosomal protein bS21 family.

The sequence is that of Small ribosomal subunit protein bS21 from Chlorobium limicola (strain DSM 245 / NBRC 103803 / 6330).